Here is a 66-residue protein sequence, read N- to C-terminus: Large ribosomal subunit protein bL33c (66 aa).

This sequence belongs to the bacterial ribosomal protein bL33 family.

The protein localises to the plastid. It is found in the chloroplast. The polypeptide is Large ribosomal subunit protein bL33c (Welwitschia mirabilis (Tree tumbo)).